Reading from the N-terminus, the 108-residue chain is MGVEIETISPGDGRTFPKKGQICVVHYTGMLQNGKKFDSSRDRNKPFKFRIGKQEVIKGFEEGAAQMSLGQRAKLTCTPDVAYGATGHPGVIPPNATLIFDVELLNLE.

One can recognise a PPIase FKBP-type domain in the interval Gly-20–Glu-108.

Belongs to the FKBP-type PPIase family. FKBP1 subfamily. In terms of assembly, identified in a complex composed of RYR2, FKBP1B, PKA catalytic subunit, PRKAR2A, AKAP6, and the protein phosphatases PP2A and PP1. Interacts directly with RYR2. Detected in heart muscle (at protein level). Ubiquitous.

The protein resides in the cytoplasm. The protein localises to the sarcoplasmic reticulum. It catalyses the reaction [protein]-peptidylproline (omega=180) = [protein]-peptidylproline (omega=0). With respect to regulation, inhibited by both FK506 and rapamycin. Its function is as follows. Has the potential to contribute to the immunosuppressive and toxic effects of FK506 and rapamycin. PPIases accelerate the folding of proteins. It catalyzes the cis-trans isomerization of proline imidic peptide bonds in oligopeptides. The protein is Peptidyl-prolyl cis-trans isomerase FKBP1B (Fkbp1b) of Rattus norvegicus (Rat).